The following is a 157-amino-acid chain: Methylamine utilization protein MauL (157 aa).

Its pathway is one-carbon metabolism; methylamine degradation. Its function is as follows. Probably involved in TTQ prosthetic group biosynthesis. This Methylobacillus flagellatus (strain ATCC 51484 / DSM 6875 / VKM B-1610 / KT) protein is Methylamine utilization protein MauL (mauL).